The primary structure comprises 420 residues: Putative polyketide beta-ketoacyl synthase 1 (420 aa).

The 412-residue stretch at 3–414 (QRRVAITGIE…GFQSAMVLTS (412 aa)) folds into the Ketosynthase family 3 (KS3) domain. Catalysis depends on for beta-ketoacyl synthase activity residues cysteine 169, histidine 307, and histidine 344.

The protein belongs to the thiolase-like superfamily. Beta-ketoacyl-ACP synthases family.

It functions in the pathway antifungal biosynthesis; monensin biosynthesis. The chain is Putative polyketide beta-ketoacyl synthase 1 from Streptomyces virginiae (Streptomyces cinnamonensis).